The primary structure comprises 972 residues: Translation initiation factor IF-2 (972 aa).

A compositionally biased stretch (basic and acidic residues) spans 48–63 (DHLRKSHGATDGDKRK). Disordered stretches follow at residues 48-85 (DHLR…KART) and 99-385 (RDDV…QAPT). Low complexity predominate over residues 105–114 (GAEQGQAQVA). Positions 121–181 (ELKRREEEAR…EEEAAAKRVA (61 aa)) are enriched in basic and acidic residues. Residues 182 to 205 (AEAAAAQQQAAAQQAAAAEQQEAA) show a composition bias toward low complexity. Basic and acidic residues predominate over residues 212 to 263 (DEARAAAERAAQREAAKKAEDAAREAADKARAEQEEISKRRAAAEAEARAIR). Residues 279 to 288 (PPKPVEPPKP) are compositionally biased toward pro residues. Residues 313 to 328 (PAGAAAPATTAPAGAG) are compositionally biased toward low complexity. The segment covering 357–370 (SSGGVDRGWRGGPK) has biased composition (gly residues). A tr-type G domain is found at 472-641 (PRPPVVTVMG…LLQAEVLELK (170 aa)). Residues 481–488 (GHVDHGKT) form a G1 region. 481 to 488 (GHVDHGKT) is a binding site for GTP. Residues 506–510 (GITQH) are G2. The tract at residues 527 to 530 (DTPG) is G3. Residues 527–531 (DTPGH) and 581–584 (NKID) contribute to the GTP site. Positions 581-584 (NKID) are G4. The interval 617-619 (SAK) is G5.

This sequence belongs to the TRAFAC class translation factor GTPase superfamily. Classic translation factor GTPase family. IF-2 subfamily.

The protein resides in the cytoplasm. Functionally, one of the essential components for the initiation of protein synthesis. Protects formylmethionyl-tRNA from spontaneous hydrolysis and promotes its binding to the 30S ribosomal subunits. Also involved in the hydrolysis of GTP during the formation of the 70S ribosomal complex. This chain is Translation initiation factor IF-2, found in Burkholderia lata (strain ATCC 17760 / DSM 23089 / LMG 22485 / NCIMB 9086 / R18194 / 383).